The sequence spans 1625 residues: MKIPGVATVLGGVTNGVAQTVRAGARLPGSAAAAVQTLASPVLELTGPVVQSVVQTTGRAIGVRGSHNESPDGMTPPVRWRSGRRVHFDLDPLLPFPRWHEHAAMVEEPVRRIPGVAEAHVEGSLGRLVVELEPDADSDIAVDEVRDVVSAVAADIFLAGSVSSPNSAPFADPGNPLAILVPLTAAAMDLVAMGATVTGWVARLPAAPQTTRALAALINHQPRMVSLMESRLGRVGTDIALAATTAAANGLTQSLGTPLLDLVQRSLQISEAAAHRRVWRDREPALASPRRPQAPVVPIISSAGAKSQEPRHSWAAAAAGEASHVVVGGSIDAAIDTAKGSRAGPVEQYVNQAANGSLIAAASALVAGGGTEDAAGAILAGVPRAAHMGRQAFAAVLGRGLANTGQLVLDPGALRRLDRVRVVVIDGAALRGDNRAVLHAQGDEPGWDDDRVYEVADALLHGEQAPEPDPDELPATGARLRWAPAQGPSATPAQGLEHADLVVDGQCVGSVDVGWEVDPYAIPLLQTAHRTGARVVLRHVAGTEDLSASVGSTHPPGTPLLKLVRELRADRGPVLLITAVHRDFASTDTLAALAIADVGVALDDPRGATPWTADLITGTDLAAAVRILSALPVARAASESAVHLAQGGTTLAGLLLVTGEQDKTTNPASFRRWLNPVNAAAATALVSGMWSAAKVLRMPDPTPQPLTAWHALDPEIVYSRLAGGSRPLAVEPGIPAWRRILDDLSYEPVMAPLRGPARTLAQLAVATRHELADPLTPILAVGAAASAIVGSNIDALLVAGVMTVNAITGGVQRLRAEAAAAELFAEQDQLVRRVVVPAVATTRRRLEAARHATRTATVSAKSLRVGDVIDLAAPEVVPADARLLVAEDLEVDESFLTGESLPVDKQVDPVAVNDPDRASMLFEGSTIVAGHARAIVVATGVGTAAHRAISAVADVETAAGVQARLRELTSKVLPMTLAGGAAVTALALLRRASLRQAVADGVAIAVAAVPEGLPLVATLSQLAAAQRLTARGALVRSPRTIEALGRVDTICFDKTGTLTENRLRVVCALPSSTAAERDPLPQTTDAPSAEVLRAAARASTQPHNGEGHAHATDEAILAAASALAGSLSSQGDSEWVVLAEVPFESSRGYAAAIGRVGTDGIPMLMLKGAPETILPRCRLADPGVDHEHAESVVRHLAEQGLRVLAVAQRTWDNGTTHDDETDADAVDAVAHDLELIGYVGLADTARSSSRPLIEALLDAERNVVLITGDHPITARAIARQLGLPADARVVTGAELAVLDEEAHAKLAADMQVFARVSPEQKVQIVAALQRCGRVTAMVGDGANDAAAIRMADVGIGVSGRGSSAARGAADIVLTDDDLGVLLDALVEGRSMWAGVRDAVTILVGGNVGEVLFTVIGTAFGAGRAPVGTRQLLLVNLLTDMFPALAVAVTSQFAEPDDAEYPTDDAAERAQREHRRAVLIGPTPSLDAPLLRQIVNRGVVTAAGATAAWAIGRWTPGTERRTATMGLTALVMTQLAQTLLTRRHSPLVIATALGSAGVLVGIIQTPVISHFFGCTPLGPVAWTGVFSATAGATAVSALAPKWLASTVGVVQPDERPDDAEDSDAGG.

The next 8 helical transmembrane spans lie at 148–168 (VVSA…PNSA), 177–197 (LAIL…GATV), 358–378 (LIAA…AGAI), 637–657 (ASES…LLLV), 673–693 (WLNP…WSAA), 778–798 (ILAV…ALLV), 968–988 (LTSK…ALAL), and 997–1017 (AVAD…PLVA). Asp1053 serves as the catalytic 4-aspartylphosphate intermediate. Mg(2+)-binding residues include Asp1340 and Asp1344. Transmembrane regions (helical) follow at residues 1401 to 1421 (ILVG…AFGA), 1432 to 1452 (LLVN…TSQF), and 1547 to 1567 (VIAT…TPVI).

Belongs to the cation transport ATPase (P-type) (TC 3.A.3) family.

The protein localises to the cell membrane. The enzyme catalyses ATP + H2O = ADP + phosphate + H(+). The protein is Probable cation-transporting ATPase I (ctpI) of Mycobacterium tuberculosis (strain CDC 1551 / Oshkosh).